Reading from the N-terminus, the 1361-residue chain is MNVYDDVIDPTVVSHSVCGHFTTTDYLELIVIRTDVLSIYKPIRSGRLYLMEEHKLSGRINDVALIPKHSNGSNGNGINLSYLLLSTGVAKLSLLMYNNMTSSIETISLHFYEDKFESATMLDLARNSQLRIEPNGNYAMLFNNDVLAILPFYTGINEDEDEDYINNDKSKINDNSKKSLFKRKKGKTQNNKVTHPSIIINCSELGPQIKNIKDIQFLCGFTKSTIGVLYQPQLAWCGNSQLVPLPTNYAIISLDMKFSIDATTFDKAIISEISQLPSDWHTIAPTLSGSLILGVNEIAFLDNTGVLQSILTLNSYSDKVLPKVRVIDKSSHEVFFNTGSKFALIPSNENERSVENILLFDENGCIFNVDLKSEGRLLTQFNITKLPLGEDVLSQKSNPSSVSIIWADGRLDTYTIFIGFQSGDATMLKLNHLHSAIEVEEPTFMKDYVNKQASAAYNNEDDDDDDDDFNLYSDEENDQVNNKNDRTFGTNESNEPFTAQELMELRNIGPINSMCVGKVSSIEDNVKGLPNPNKQEISIVCTSGYGDGSHLNAILASVQPRVEKALKFISITKIWNLHIKGKDKFLITTDSTQSQSNIYEIDNNFSQHKQGRLRRDATTIHIATIGDNKRIVQVTTNHLYLYDLTFRRFSTIKFDYEVVHVSVMDPYVLITLSRGDIKVFELENRNKKKFVKVPLPEILTEMVITSGLILKSNMCNEFLSGIGKSTIEQLLFTFVTADNQIIFFTKDHNDRIFQLNGIDQLQDSLYISTYQLPDEIIPDPSIKQIMINKLGNNSKDEYLTILTFGGEIYQYKKSRSRHSRFYRNVGRNDHPITGAPDNAYPKGVSGIERIMHYIPNFDGYSVIFVTGNTPYIIMKEDDSLPRIFPFGNIPIVSMSRWGEGSVICIDDIKNARIYSLNQDNIYYGNKLPIRKIKIGSMLQNYKTLNSIVYHERTQLYLVSYTKEISYEAKAEDGSLLIGYKPELPNAKAFKSGVLLINPKSWEVIDELDLPDNSLVNDMKSSFIQIDTRTKRKREYIIVGIGYATMEDVPPTGEFHIYDITEVVPEPGKPNTNFKLKEIFKEDIRGIVSVVNGISGRFLISQSQKIMVRDVQQDNSVIPVAFLDVPVFVTSLKTFGNLIVIGDAMQGIQFVGFDAEPYRMITLGSSITKFEVISVEFLVNNGDIYFLVTDRDSIMHVLKYAPDQPNTLSGQRLVHCSSFNLHSLNNCTMLLPKNDEFPRDQRYSRSFQTITAQVDGSISKIVPVKEETYRRLYFIQQQIIDKEPQLAGLNPRMERQDNKYYHLGHSLRPMLDFNIIKRFKDMSMNRRSHIVQKLGKNSNLEVWRDLIDLEFSLRSLKPTDQN.

Residues 455–493 (AAYNNEDDDDDDDDFNLYSDEENDQVNNKNDRTFGTNES) form a disordered region. The segment covering 459–478 (NEDDDDDDDDFNLYSDEEND) has biased composition (acidic residues). Over residues 479-493 (QVNNKNDRTFGTNES) the composition is skewed to polar residues.

Belongs to the CFT1 family.

It localises to the nucleus. RNA-binding component of the cleavage and polyadenylation factor (CPF) complex, which plays a key role in polyadenylation-dependent pre-mRNA 3'-end formation and cooperates with cleavage factors including the CFIA complex and NAB4/CFIB. Involved in poly(A) site recognition. May be involved in coupling transcription termination and mRNA 3'-end formation. The polypeptide is Protein CFT1 (CFT1) (Candida glabrata (strain ATCC 2001 / BCRC 20586 / JCM 3761 / NBRC 0622 / NRRL Y-65 / CBS 138) (Yeast)).